The chain runs to 180 residues: tRNA (cytidine(56)-2'-O)-methyltransferase (180 aa).

S-adenosyl-L-methionine is bound by residues leucine 82, 112–116 (GAEKV), and 130–137 (VGNQPHSE).

Belongs to the aTrm56 family. As to quaternary structure, homodimer.

The protein localises to the cytoplasm. The enzyme catalyses cytidine(56) in tRNA + S-adenosyl-L-methionine = 2'-O-methylcytidine(56) in tRNA + S-adenosyl-L-homocysteine + H(+). Its function is as follows. Specifically catalyzes the AdoMet-dependent 2'-O-ribose methylation of cytidine at position 56 in tRNAs. In Methanococcus vannielii (strain ATCC 35089 / DSM 1224 / JCM 13029 / OCM 148 / SB), this protein is tRNA (cytidine(56)-2'-O)-methyltransferase.